The primary structure comprises 144 residues: Universal stress protein F (144 aa).

The protein belongs to the universal stress protein A family. Homodimer.

In Escherichia coli O157:H7, this protein is Universal stress protein F (uspF).